The primary structure comprises 693 residues: Elongation factor G (693 aa).

One can recognise a tr-type G domain in the interval 9–283 (ERVRNIGIIA…AVCDYLPSPV (275 aa)). Residues 18–25 (AHIDAGKT), 82–86 (DTPGH), and 136–139 (NKMD) contribute to the GTP site.

The protein belongs to the TRAFAC class translation factor GTPase superfamily. Classic translation factor GTPase family. EF-G/EF-2 subfamily.

Its subcellular location is the cytoplasm. Functionally, catalyzes the GTP-dependent ribosomal translocation step during translation elongation. During this step, the ribosome changes from the pre-translocational (PRE) to the post-translocational (POST) state as the newly formed A-site-bound peptidyl-tRNA and P-site-bound deacylated tRNA move to the P and E sites, respectively. Catalyzes the coordinated movement of the two tRNA molecules, the mRNA and conformational changes in the ribosome. In Dehalococcoides mccartyi (strain ATCC BAA-2266 / KCTC 15142 / 195) (Dehalococcoides ethenogenes (strain 195)), this protein is Elongation factor G.